Consider the following 209-residue polypeptide: Mitochondrial import inner membrane translocase subunit Tim23 (209 aa).

3 consecutive transmembrane segments (helical) span residues 73 to 93 (FELA…FGAL), 125 to 145 (ALWA…GVII), and 181 to 197 (GLAG…YNNW).

The protein belongs to the Tim17/Tim22/Tim23 family. In terms of assembly, component of the TIM23 complex at least composed of TIMM23, TIMM17 (TIMM17A or TIMM17B) and TIMM50; within this complex, directly interacts with TIMM50. The complex interacts with the TIMM44 component of the PAM complex and with DNAJC15. Upon mitochondrial depolarization, interacts with PINK1; the interaction is required for PINK1 accumulation at the outer mitochondrial membrane, kinase activation by autophosphorylation and PRKN recruitement to mitochondria.

It localises to the mitochondrion inner membrane. Functionally, essential component of the TIM23 complex, a complex that mediates the translocation of transit peptide-containing proteins across the mitochondrial inner membrane. Has a role in the activation of stress-induced mitophagy by protecting PINK1 from OMA1-mediated degradation and facilitating its accumulation at the outer mitochondrial membrane in response to depolarization. This is Mitochondrial import inner membrane translocase subunit Tim23 (Timm23) from Rattus norvegicus (Rat).